The primary structure comprises 248 residues: Probable transcriptional regulatory protein ECH_0704 (248 aa).

Residues 1 to 21 are disordered; the sequence is MAGHSQFANIKHRKGAQDAKR.

This sequence belongs to the TACO1 family.

It is found in the cytoplasm. The protein is Probable transcriptional regulatory protein ECH_0704 of Ehrlichia chaffeensis (strain ATCC CRL-10679 / Arkansas).